The sequence spans 1630 residues: Transient receptor potential cation channel subfamily M member 1 (1630 aa).

Disordered stretches follow at residues 1–25 (MGSMRKMSSSFKRGSIKSSTSGSQK), 65–92 (PLPSVTPSSTAEDTKQGDAQSGKWSVSK), 453–492 (APPVDTKVAEKEKKPPTATTKGRGKGKGKKKGKVKEEVEE), 620–643 (LGMEDDEPPAKGKKKKKKKKEEEI), and 824–858 (SKENEDGKEKEEENVDANADAGSRKGDEENEHKKQ). The Cytoplasmic portion of the chain corresponds to 1–877 (MGSMRKMSSS…CEFYNAPIVK (877 aa)). A compositionally biased stretch (low complexity) spans 8–25 (SSSFKRGSIKSSTSGSQK). The span at 69–92 (VTPSSTAEDTKQGDAQSGKWSVSK) shows a compositional bias: polar residues. Residues 474-485 (GRGKGKGKKKGK) show a composition bias toward basic residues. 2 stretches are compositionally biased toward basic and acidic residues: residues 825–834 (KENEDGKEKE) and 845–855 (GSRKGDEENEH). A helical membrane pass occupies residues 878-898 (FWFYTISYLGYLLLFNYVILV). The Extracellular segment spans residues 899-944 (RMDGWPSPQEWIVISYIVSLALEKIREILMSEPGKLSQKIKVWLQE). The helical transmembrane segment at 945–965 (YWNITDLVAISMFMVGAILRL) threads the bilayer. The Cytoplasmic portion of the chain corresponds to 966-975 (QNQPYMGYGR). Residues 976–996 (VIYCVDIILWYIRVLDIFGVN) traverse the membrane as a helical segment. Over 997–1008 (KYLGPYVMMIGK) the chain is Extracellular. Residues 1009–1029 (MMIDMLYFVVIMLVVLMSFGV) form a helical membrane-spanning segment. The Cytoplasmic portion of the chain corresponds to 1030 to 1107 (ARQAILHPEE…CIPGAWLTPA (78 aa)). A helical membrane pass occupies residues 1108-1128 (LMACYLLVANILLVNLLIAVF). The N-linked (GlcNAc...) asparagine glycan is linked to Asn-1129. Residues 1129–1158 (NNTFFEVKSISNQVWKFQRYQLIMTFHDRP) are Extracellular-facing. Residues 1159–1179 (VLPPPMIILSHIYIIVMRLSG) traverse the membrane as a helical segment. Topologically, residues 1180–1630 (RCRKKREGDQ…QEKGNPETEC (451 aa)) are cytoplasmic. Positions 1235–1255 (IRVTSERVENMSMRLEEINER) form a coiled coil. Disordered regions lie at residues 1362-1414 (EDVK…AGEL) and 1575-1630 (CLRS…ETEC).

It belongs to the transient receptor (TC 1.A.4) family. LTrpC subfamily. TRPM1 sub-subfamily. Interacts with TRPM3; the interaction results in the formation of a heteromultimeric cation channel complex that are functionally different from the homomeric channels. Interacts with GPR179. Associates with both guanine nucleotide-binding proteins G(o) and beta-gamma G protein dimer; implicated in directly regulating TRPM1 channel open-state.

The protein resides in the cell membrane. The protein localises to the endoplasmic reticulum membrane. It localises to the cell projection. Its subcellular location is the axon. The enzyme catalyses Ca(2+)(in) = Ca(2+)(out). It catalyses the reaction Mg(2+)(in) = Mg(2+)(out). It carries out the reaction Mn(2+)(in) = Mn(2+)(out). The catalysed reaction is Ni(2+)(in) = Ni(2+)(out). Inhibited by extracellular zinc ions. Inhibited by intracellular Mg(2+). Activated by the neuroactive steroid pregnenolone sulfate. Negatively regulated by activation of GRM6 receptors in the ON-bipolar cells. Its function is as follows. Constitutively open nonselective divalent cation-conducting channels which mediate the influx of Ca(2+), Mg(2+), Mn(2+), Ba(2+), and Ni(2+) into the cytoplasm, leading to membrane depolarization. Impermeable to zinc ions. In addition, forms heteromultimeric ion channels with TRPM3 which are permeable for calcium and zinc ions. Plays an essential role for the depolarizing photoresponse of retinal ON bipolar cells. In the dark, tonic release of glutamate activates the G-protein coupled receptor for glutamate GRM6, its activation induces the release of G(o) protein and the beta-gamma G protein dimer. Both subunits can interact and inactivate the TRPM1 channel. A light onset, induces decrease in glutamate release and deactivation of GRM6 leading to channel opening and membrane depolarization. May play a role in metastasis suppression. This Rattus norvegicus (Rat) protein is Transient receptor potential cation channel subfamily M member 1.